Consider the following 950-residue polypeptide: Lon protease homolog, mitochondrial (950 aa).

A mitochondrion-targeting transit peptide spans methionine 1–glycine 65. Disordered stretches follow at residues tryptophan 67–glycine 94 and proline 212–lysine 243. The 249-residue stretch at leucine 112–phenylalanine 360 folds into the Lon N-terminal domain. The span at lysine 224 to lysine 233 shows a compositional bias: basic residues. Glycine 513–threonine 520 contacts ATP. A Lon proteolytic domain is found at valine 749–leucine 939. Catalysis depends on residues serine 845 and lysine 888.

This sequence belongs to the peptidase S16 family. In terms of assembly, homohexamer. Organized in a ring with a central cavity. The ATP-binding and proteolytic domains (AP-domain) form a hexameric chamber, while the N-terminal domain is arranged as a trimer of dimers. DNA and RNA binding is stimulated by substrate and inhibited by ATP binding. Interacts with TWNK and mitochondrial DNA polymerase subunit POLG.

Its subcellular location is the mitochondrion matrix. The catalysed reaction is Hydrolysis of proteins in presence of ATP.. In terms of biological role, ATP-dependent serine protease that mediates the selective degradation of misfolded, unassembled or oxidatively damaged polypeptides as well as certain short-lived regulatory proteins in the mitochondrial matrix. Endogenous substrates include mitochondrial steroidogenic acute regulatory (StAR) protein, DELE1, helicase Twinkle (TWNK) and the large ribosomal subunit protein MRPL32/bL32m. MRPL32/bL32m is protected from degradation by LONP1 when it is bound to a nucleic acid (RNA), but TWNK is not. May also have a chaperone function in the assembly of inner membrane protein complexes. Participates in the regulation of mitochondrial gene expression and in the maintenance of the integrity of the mitochondrial genome. Binds to mitochondrial promoters and RNA in a single-stranded, site-specific, and strand-specific manner. May regulate mitochondrial DNA replication and/or gene expression using site-specific, single-stranded DNA binding to target the degradation of regulatory proteins binding to adjacent sites in mitochondrial promoters. The polypeptide is Lon protease homolog, mitochondrial (Lonp1) (Rattus norvegicus (Rat)).